Here is a 187-residue protein sequence, read N- to C-terminus: Elongation factor P (187 aa).

This sequence belongs to the elongation factor P family.

The protein localises to the cytoplasm. The protein operates within protein biosynthesis; polypeptide chain elongation. Involved in peptide bond synthesis. Stimulates efficient translation and peptide-bond synthesis on native or reconstituted 70S ribosomes in vitro. Probably functions indirectly by altering the affinity of the ribosome for aminoacyl-tRNA, thus increasing their reactivity as acceptors for peptidyl transferase. The chain is Elongation factor P from Roseobacter denitrificans (strain ATCC 33942 / OCh 114) (Erythrobacter sp. (strain OCh 114)).